The following is a 640-amino-acid chain: 1,4-alpha-glucan branching enzyme GlgB (640 aa).

D318 acts as the Nucleophile in catalysis. E371 acts as the Proton donor in catalysis.

It belongs to the glycosyl hydrolase 13 family. GlgB subfamily. In terms of assembly, monomer.

The enzyme catalyses Transfers a segment of a (1-&gt;4)-alpha-D-glucan chain to a primary hydroxy group in a similar glucan chain.. It participates in glycan biosynthesis; glycogen biosynthesis. Catalyzes the formation of the alpha-1,6-glucosidic linkages in glycogen by scission of a 1,4-alpha-linked oligosaccharide from growing alpha-1,4-glucan chains and the subsequent attachment of the oligosaccharide to the alpha-1,6 position. This chain is 1,4-alpha-glucan branching enzyme GlgB, found in Francisella tularensis subsp. mediasiatica (strain FSC147).